Consider the following 1216-residue polypeptide: Sodium/potassium/calcium exchanger 1 (1216 aa).

The Extracellular segment spans residues 1–446 (MGKLIRMGAQ…DLFSVEERRQ (446 aa)). The tract at residues 94-196 (EATAGRDGTP…KYSPSPLGRM (103 aa)) is disordered. Polar residues-rich tracts occupy residues 110-135 (NTPS…TPTG) and 144-166 (SATP…SYTR). Residues Asn290 and Asn303 are each glycosylated (N-linked (GlcNAc...) asparagine). Residues 447 to 467 (GWVVLHIFGMMYVFVALAIVC) form a helical membrane-spanning segment. At 468-491 (DEYFVPALGVITDKLQISEDVAGA) the chain is on the cytoplasmic side. An Alpha-1 repeat occupies 488–528 (VAGATFMAAGGSAPELFTSLIGVFISHSNVGIGTIVGSAVF). A helical transmembrane segment spans residues 492-512 (TFMAAGGSAPELFTSLIGVFI). The Extracellular portion of the chain corresponds to 513 to 518 (SHSNVG). The helical transmembrane segment at 519–539 (IGTIVGSAVFNILFVIGTCAL) threads the bilayer. Residues 540–557 (FSREILNLTWWPLFRDIT) lie on the Cytoplasmic side of the membrane. A helical transmembrane segment spans residues 558–578 (FYIFDLMMLILFFLDSLIAWW). A topological domain (extracellular) is located at residue Glu579. Residues 580-600 (SVLLLLAYAFYVFTMKWNQQL) traverse the membrane as a helical segment. Topologically, residues 601–1024 (ELWVKEQLNK…SLEWPETRRK (424 aa)) are cytoplasmic. Ser652 is subject to Phosphoserine. A disordered region spans residues 677-1018 (GEARPSKDKE…ENEQPLSLEW (342 aa)). A compositionally biased stretch (basic and acidic residues) spans 702–712 (AESKPEEEPAK). Residue Thr717 is modified to Phosphothreonine. One copy of the 1; approximate repeat lies at 796–811 (DEDEGEIQAEGGEVKG). Residues 796–928 (DEDEGEIQAE…QAGEAGEVEG (133 aa)) form an 8 X 17 AA tandem repeats of D-E-D-E-G-E-I-Q-A-G-E-[GA]-G-E-V-[EK]-G region. Tandem repeats lie at residues 812 to 828 (DEDE…EVEG), 829 to 845 (DEDE…EVEG), 846 to 862 (DEDE…EVEG), 863 to 879 (DEDE…EVEG), 880 to 896 (DEDE…EVEG), and 897 to 913 (DEDE…EVKG). Acidic residues-rich tracts occupy residues 824-834 (GEVEGDEDEGE), 841-851 (GEVEGDEDEGE), 858-868 (GEVEGDEDEGE), 875-885 (GEVEGDEDEGE), 892-902 (GEVEGDEDEGE), 924-941 (GEVE…DEGE), and 981-1011 (GDSE…EENE). One copy of the 8; approximate repeat lies at 914–928 (DEGEIQAGEAGEVEG). Residues 1025–1045 (QAIYLFLLPIVFPLWLTVPDV) form a helical membrane-spanning segment. Over 1046-1052 (RRLEAKK) the chain is Extracellular. The helical transmembrane segment at 1053 to 1073 (FFVITFLGSILWIAMFSYLMV) threads the bilayer. Topologically, residues 1074 to 1088 (WWAHQVGETIGISEE) are cytoplasmic. A helical membrane pass occupies residues 1089–1109 (IMGLTILAAGTSIPDLITSVI). The stretch at 1096–1127 (AAGTSIPDLITSVIVARKGLGDMAVSSSVGSN) is one Alpha-2 repeat. At 1110 to 1127 (VARKGLGDMAVSSSVGSN) the chain is on the extracellular side. A helical membrane pass occupies residues 1128–1148 (IFDITVGLPLPWMLFSLINGL). The Cytoplasmic segment spans residues 1149–1157 (QPVAVSSNG). Residues 1158-1178 (LFCAIVLLFLMLLFVISSIAL) form a helical membrane-spanning segment. Residues 1179–1185 (CKWRMNK) lie on the Extracellular side of the membrane. Residues 1186–1206 (ILGFTMFLLYFVFLIISVMLE) form a helical membrane-spanning segment. At 1207–1216 (DRIISCPVSV) the chain is on the cytoplasmic side.

This sequence belongs to the Ca(2+):cation antiporter (CaCA) (TC 2.A.19) family. SLC24A subfamily. The uncleaved signal sequence is required for efficient membrane targeting and proper membrane integration and topology. Post-translationally, glycosylated. Retina.

The protein localises to the cell membrane. It carries out the reaction Ca(2+)(out) + K(+)(out) + 4 Na(+)(in) = Ca(2+)(in) + K(+)(in) + 4 Na(+)(out). In terms of biological role, calcium, potassium:sodium antiporter that transports 1 Ca(2+) and 1 K(+) in exchange for 4 Na(+). Critical component of the visual transduction cascade, controlling the calcium concentration of outer segments during light and darkness. Light causes a rapid lowering of cytosolic free calcium in the outer segment of both retinal rod and cone photoreceptors and the light-induced lowering of calcium is caused by extrusion via this protein which plays a key role in the process of light adaptation. This is Sodium/potassium/calcium exchanger 1 (SLC24A1) from Bos taurus (Bovine).